A 618-amino-acid polypeptide reads, in one-letter code: DNA mismatch repair protein MutL (618 aa).

The segment covering 367 to 381 (EPTAAREPATPRYSG) has biased composition (low complexity). Residues 367–402 (EPTAAREPATPRYSGGASGGNGGRQSAGGWPHAQPG) are disordered. The segment covering 382 to 392 (GASGGNGGRQS) has biased composition (gly residues).

The protein belongs to the DNA mismatch repair MutL/HexB family.

This protein is involved in the repair of mismatches in DNA. It is required for dam-dependent methyl-directed DNA mismatch repair. May act as a 'molecular matchmaker', a protein that promotes the formation of a stable complex between two or more DNA-binding proteins in an ATP-dependent manner without itself being part of a final effector complex. This is DNA mismatch repair protein MutL from Salmonella gallinarum (strain 287/91 / NCTC 13346).